The sequence spans 450 residues: Phosphoglucosamine mutase (450 aa).

The Phosphoserine intermediate role is filled by Ser102. Positions 102, 244, 246, and 248 each coordinate Mg(2+). Residue Ser102 is modified to Phosphoserine.

The protein belongs to the phosphohexose mutase family. The cofactor is Mg(2+). Activated by phosphorylation.

The catalysed reaction is alpha-D-glucosamine 1-phosphate = D-glucosamine 6-phosphate. Functionally, catalyzes the conversion of glucosamine-6-phosphate to glucosamine-1-phosphate. This chain is Phosphoglucosamine mutase, found in Nitratidesulfovibrio vulgaris (strain ATCC 29579 / DSM 644 / CCUG 34227 / NCIMB 8303 / VKM B-1760 / Hildenborough) (Desulfovibrio vulgaris).